Reading from the N-terminus, the 200-residue chain is MESQARVKFYCDEARCIDCHGCDVACKEAHHLPVGVNRRRVVTLNEGLVGKEKSLSIACMHCSDAPCAQVCPVDCFYVRADGIVLHDKEKCIGCGYCLYACPFGAPQFPKSGIFGSRGPMDKCTFCAGGPEETHSEKEYKLYGQNRIAEGKVPVCAAMCSTKALLAGDSDSISLIIRERVLKRGSGTASVPYTWSQAYKD.

3 4Fe-4S ferredoxin-type domains span residues 7–37 (VKFY…VGVN), 50–81 (GKEK…VRAD), and 82–111 (GIVL…FPKS). [4Fe-4S] cluster is bound by residues C16, C19, C22, C26, C59, C62, C67, C71, C91, C94, C97, C101, C123, C126, C155, and C159.

In terms of assembly, formate dehydrogenase is a membrane-bound complex, formed of at least three different subunits. It depends on [4Fe-4S] cluster as a cofactor.

This chain is an electron transfer unit containing 18 cysteine residues, 16 of which occur in four clusters. The protein is Formate dehydrogenase iron-sulfur subunit (fdhB1) of Wolinella succinogenes (strain ATCC 29543 / DSM 1740 / CCUG 13145 / JCM 31913 / LMG 7466 / NCTC 11488 / FDC 602W) (Vibrio succinogenes).